Reading from the N-terminus, the 146-residue chain is D-aminoacyl-tRNA deacylase (146 aa).

The Gly-cisPro motif, important for rejection of L-amino acids motif lies at 137-138; that stretch reads GP.

This sequence belongs to the DTD family. As to quaternary structure, homodimer.

The protein resides in the cytoplasm. The enzyme catalyses glycyl-tRNA(Ala) + H2O = tRNA(Ala) + glycine + H(+). It carries out the reaction a D-aminoacyl-tRNA + H2O = a tRNA + a D-alpha-amino acid + H(+). Functionally, an aminoacyl-tRNA editing enzyme that deacylates mischarged D-aminoacyl-tRNAs. Also deacylates mischarged glycyl-tRNA(Ala), protecting cells against glycine mischarging by AlaRS. Acts via tRNA-based rather than protein-based catalysis; rejects L-amino acids rather than detecting D-amino acids in the active site. By recycling D-aminoacyl-tRNA to D-amino acids and free tRNA molecules, this enzyme counteracts the toxicity associated with the formation of D-aminoacyl-tRNA entities in vivo and helps enforce protein L-homochirality. The protein is D-aminoacyl-tRNA deacylase of Thermodesulfovibrio yellowstonii (strain ATCC 51303 / DSM 11347 / YP87).